A 56-amino-acid chain; its full sequence is 4Fe-4S ferredoxin FdxA (56 aa).

4Fe-4S ferredoxin-type domains follow at residues 1–28 (MAYV…SSGD) and 29–56 (DRYV…PVQA). 8 residues coordinate [4Fe-4S] cluster: C9, C12, C15, C19, C38, C41, C44, and C48.

[4Fe-4S] cluster is required as a cofactor.

In terms of biological role, ferredoxins are iron-sulfur proteins that transfer electrons in a wide variety of metabolic reactions. The sequence is that of 4Fe-4S ferredoxin FdxA from Gottschalkia acidurici (strain ATCC 7906 / DSM 604 / BCRC 14475 / CIP 104303 / KCTC 5404 / NCIMB 10678 / 9a) (Clostridium acidurici).